The following is a 505-amino-acid chain: tRNA (guanine(6)-N(2))-methyltransferase THUMP3 (505 aa).

The disordered stretch occupies residues 145–182 (KAKRRKANQSAGKEKADCGQGDKADEKDGKKKHASSTS). Basic and acidic residues predominate over residues 156–173 (GKEKADCGQGDKADEKDG). One can recognise a THUMP domain in the interval 171–287 (KDGKKKHASS…DNEVIVAIAL (117 aa)).

The protein belongs to the methyltransferase superfamily. Part of the heterodimeric THUMPD3-TRM112 methyltransferase complex; this complex forms an active tRNA methyltransferase, where TRMT112 acts as an activator of the catalytic subunit THUMPD3. In terms of tissue distribution, ubiquitously expressed. Abundantly expressed in the testis, also expressed in the brain, heart, kidney, liver, lung, muscle and spleen.

The protein localises to the cytoplasm. The enzyme catalyses guanosine(6) in tRNA + S-adenosyl-L-methionine = N(2)-methylguanosine(6) in tRNA + S-adenosyl-L-homocysteine + H(+). The catalysed reaction is guanosine(7) in tRNA + S-adenosyl-L-methionine = N(2)-methylguanosine(7) in tRNA + S-adenosyl-L-homocysteine + H(+). Functionally, catalytic subunit of the THUMPD3-TRM112 methyltransferase complex, that specifically mediates the S-adenosyl-L-methionine-dependent N(2)-methylation of guanosine nucleotide at position 6 (m2G6) in tRNAs. This is one of the major tRNA (guanine-N(2))-methyltransferases. Also catalyzes the S-adenosyl-L-methionine-dependent N(2)-methylation of guanosine nucleotide at position 7 of tRNA(Trp). This is tRNA (guanine(6)-N(2))-methyltransferase THUMP3 from Mus musculus (Mouse).